An 801-amino-acid polypeptide reads, in one-letter code: Potassium transporter 1 (801 aa).

Positions 1–20 (MSSALEVEGSGSPGVEPAAT) are disordered. The Cytoplasmic portion of the chain corresponds to 1–57 (MSSALEVEGSGSPGVEPAATATASRLKRHDSLFGDAEKVSGGKHHGGSAVSWAVTLH). A helical membrane pass occupies residues 58–80 (LAFQSVGIIYGDIGTSPLYVYSS). Topologically, residues 81-94 (TFPDGIGHRDDLVG) are extracellular. A helical membrane pass occupies residues 95 to 115 (VLSLILYTLIIIPMLKYVFIV). At 116–181 (LYANDNGDGG…HKLESSRAAK (66 aa)) the chain is on the cytoplasmic side. The helical transmembrane segment at 182–202 (MALFFLTILGTSMVMGDGTLT) threads the bilayer. At 203 to 219 (PAISVLSAVSGIREKAP) the chain is on the extracellular side. The chain crosses the membrane as a helical span at residues 220-240 (NLTQTQVVLISVAILFMLFSV). Residues 241–247 (QRFGTDK) lie on the Cytoplasmic side of the membrane. The chain crosses the membrane as a helical span at residues 248-268 (VGYTFAPIISVWFLLIAGIGL). The Extracellular segment spans residues 269 to 298 (YNLVVHEITILKAFNPWYIVQYFRRNGKKG). Residues 299–319 (WVSLGGVVLCVTGTEGMFADL) form a helical membrane-spanning segment. Over 320–328 (GHFNIRAVQ) the chain is Cytoplasmic. A helical membrane pass occupies residues 329–349 (ISFNCILFPSVALCYIGQAAY). At 350 to 375 (LRKFPENVSDTFYKSIPGKYRDRLNF) the chain is on the extracellular side. Residues 376-398 (GPLFWPTFIVAILAAIIASQAML) traverse the membrane as a helical segment. Topologically, residues 399-429 (SGAFAILSKALSLGCLPRVRVIHTSKKYEGQ) are cytoplasmic. The chain crosses the membrane as a helical span at residues 430 to 450 (VYIPEVNFMMGLASIIVTIAF). Residues 451–461 (RTTTSIGNAYG) lie on the Extracellular side of the membrane. Residues 462–482 (ICVVTTFMVTTHLMTVVMLLI) traverse the membrane as a helical segment. At 483–487 (WKKHL) the chain is on the cytoplasmic side. Residues 488–508 (VFILLFYCVFGFTEVVYLSSI) form a helical membrane-spanning segment. Over 509–511 (LSK) the chain is Extracellular. The chain crosses the membrane as a helical span at residues 512–532 (FVDGGYLPFCFAMVLMTMMAT). Residues 533–801 (WHYVHVRRYW…LLKVGITYEI (269 aa)) are Cytoplasmic-facing. Residues 679–728 (DDDDEAAARPRRSTSSAVHSEEAIQAASSGRTTASSVQLQAGGEPPAAMD) form a disordered region. The segment covering 704–717 (AASSGRTTASSVQL) has biased composition (polar residues).

It belongs to the HAK/KUP transporter (TC 2.A.72.3) family. In terms of tissue distribution, expressed almost exclusively in roots.

The protein resides in the cell membrane. Its function is as follows. High-affinity potassium transporter. Also transports rubidium, with the same affinity and cesium, with a lower affinity. The chain is Potassium transporter 1 (HAK1) from Oryza sativa subsp. japonica (Rice).